The primary structure comprises 743 residues: Catalase-peroxidase (743 aa).

The interval 1–21 (MSENHETVVSELNEESGGGCP) is disordered. A cross-link (tryptophyl-tyrosyl-methioninium (Trp-Tyr) (with M-257)) is located at residues 108-231 (WHSAGTYRIS…LGAVQMGLIY (124 aa)). Histidine 109 acts as the Proton acceptor in catalysis. The tryptophyl-tyrosyl-methioninium (Tyr-Met) (with W-108) cross-link spans 231–257 (YVNPEGPNGTPDPLAAARDIRETFRRM). Histidine 272 provides a ligand contact to heme b. A disordered region spans residues 275–296 (GKTHGAGDPDNVGPEPEGAPLE).

It belongs to the peroxidase family. Peroxidase/catalase subfamily. In terms of assembly, homodimer or homotetramer. The cofactor is heme b. Formation of the three residue Trp-Tyr-Met cross-link is important for the catalase, but not the peroxidase activity of the enzyme.

The enzyme catalyses H2O2 + AH2 = A + 2 H2O. It catalyses the reaction 2 H2O2 = O2 + 2 H2O. Bifunctional enzyme with both catalase and broad-spectrum peroxidase activity. The protein is Catalase-peroxidase of Parafrankia sp. (strain EAN1pec).